We begin with the raw amino-acid sequence, 317 residues long: Transaldolase (317 aa).

Catalysis depends on Lys-132, which acts as the Schiff-base intermediate with substrate.

The protein belongs to the transaldolase family. Type 1 subfamily. As to quaternary structure, homodimer.

The protein localises to the cytoplasm. It carries out the reaction D-sedoheptulose 7-phosphate + D-glyceraldehyde 3-phosphate = D-erythrose 4-phosphate + beta-D-fructose 6-phosphate. It functions in the pathway carbohydrate degradation; pentose phosphate pathway; D-glyceraldehyde 3-phosphate and beta-D-fructose 6-phosphate from D-ribose 5-phosphate and D-xylulose 5-phosphate (non-oxidative stage): step 2/3. Functionally, transaldolase is important for the balance of metabolites in the pentose-phosphate pathway. This Edwardsiella ictaluri (strain 93-146) protein is Transaldolase.